Consider the following 479-residue polypeptide: Altronate oxidoreductase (479 aa).

18–29 lines the NAD(+) pocket; sequence IIQFGEGNFLRA.

Belongs to the mannitol dehydrogenase family. UxaB subfamily.

It catalyses the reaction D-altronate + NAD(+) = keto-D-tagaturonate + NADH + H(+). It participates in carbohydrate metabolism; pentose and glucuronate interconversion. The chain is Altronate oxidoreductase from Phocaeicola vulgatus (strain ATCC 8482 / DSM 1447 / JCM 5826 / CCUG 4940 / NBRC 14291 / NCTC 11154) (Bacteroides vulgatus).